Reading from the N-terminus, the 336-residue chain is Phosphoribosylformylglycinamidine cyclo-ligase (336 aa).

This sequence belongs to the AIR synthase family.

The protein localises to the cytoplasm. The enzyme catalyses 2-formamido-N(1)-(5-O-phospho-beta-D-ribosyl)acetamidine + ATP = 5-amino-1-(5-phospho-beta-D-ribosyl)imidazole + ADP + phosphate + H(+). It participates in purine metabolism; IMP biosynthesis via de novo pathway; 5-amino-1-(5-phospho-D-ribosyl)imidazole from N(2)-formyl-N(1)-(5-phospho-D-ribosyl)glycinamide: step 2/2. In Thermoanaerobacter sp. (strain X514), this protein is Phosphoribosylformylglycinamidine cyclo-ligase.